The sequence spans 686 residues: UvrABC system protein C (686 aa).

Over residues 1 to 14 (MVHDSTDDPDDTRV) the composition is skewed to basic and acidic residues. The segment at 1-48 (MVHDSTDDPDDTRVRKSRRGTALDAPPQETAPPDLDPATTGGDDEDDA) is disordered. The GIY-YIG domain maps to 81–160 (TSPGVYRMLN…IKQLRPRFNV (80 aa)). One can recognise a UVR domain in the interval 270 to 305 (HAVKQELAGEMEKAANELEFETAALYRDRLAALSAI).

The protein belongs to the UvrC family. As to quaternary structure, interacts with UvrB in an incision complex.

The protein localises to the cytoplasm. Functionally, the UvrABC repair system catalyzes the recognition and processing of DNA lesions. UvrC both incises the 5' and 3' sides of the lesion. The N-terminal half is responsible for the 3' incision and the C-terminal half is responsible for the 5' incision. The protein is UvrABC system protein C of Bradyrhizobium diazoefficiens (strain JCM 10833 / BCRC 13528 / IAM 13628 / NBRC 14792 / USDA 110).